The primary structure comprises 425 residues: Serine--tRNA ligase (425 aa).

Thr-231–Glu-233 serves as a coordination point for L-serine. Arg-262–Glu-264 is a binding site for ATP. Glu-285 provides a ligand contact to L-serine. ATP is bound at residue Glu-349–Ser-352. Ser-385 is a binding site for L-serine.

It belongs to the class-II aminoacyl-tRNA synthetase family. Type-1 seryl-tRNA synthetase subfamily. As to quaternary structure, homodimer. The tRNA molecule binds across the dimer.

The protein resides in the cytoplasm. It catalyses the reaction tRNA(Ser) + L-serine + ATP = L-seryl-tRNA(Ser) + AMP + diphosphate + H(+). The enzyme catalyses tRNA(Sec) + L-serine + ATP = L-seryl-tRNA(Sec) + AMP + diphosphate + H(+). The protein operates within aminoacyl-tRNA biosynthesis; selenocysteinyl-tRNA(Sec) biosynthesis; L-seryl-tRNA(Sec) from L-serine and tRNA(Sec): step 1/1. In terms of biological role, catalyzes the attachment of serine to tRNA(Ser). Is also able to aminoacylate tRNA(Sec) with serine, to form the misacylated tRNA L-seryl-tRNA(Sec), which will be further converted into selenocysteinyl-tRNA(Sec). The protein is Serine--tRNA ligase of Halalkalibacterium halodurans (strain ATCC BAA-125 / DSM 18197 / FERM 7344 / JCM 9153 / C-125) (Bacillus halodurans).